Reading from the N-terminus, the 197-residue chain is LexA repressor (197 aa).

The H-T-H motif DNA-binding region spans 28–47 (VREIARRFRITPRGALLHLI). Active-site for autocatalytic cleavage activity residues include Ser-119 and Lys-156.

It belongs to the peptidase S24 family. Homodimer.

The enzyme catalyses Hydrolysis of Ala-|-Gly bond in repressor LexA.. In terms of biological role, represses a number of genes involved in the response to DNA damage (SOS response), including recA and lexA. In the presence of single-stranded DNA, RecA interacts with LexA causing an autocatalytic cleavage which disrupts the DNA-binding part of LexA, leading to derepression of the SOS regulon and eventually DNA repair. The chain is LexA repressor from Thermotoga sp. (strain RQ2).